Reading from the N-terminus, the 1916-residue chain is Telomere length regulator protein RIF1 (1916 aa).

The span at 1–26 (MSKDFSDKKKHTIDRIDQHILRRSQH) shows a compositional bias: basic and acidic residues. Residues 1–71 (MSKDFSDKKK…RRKLASSSDC (71 aa)) form a disordered region. Positions 27 to 37 (DNYSNGSSPWM) are enriched in polar residues. Position 97 is a phosphoserine (serine 97). 6 disordered regions span residues 126-149 (PIYR…SILR), 1314-1372 (PATQ…EEVD), 1441-1476 (RSIK…SKGH), 1606-1678 (EVPG…EESR), 1789-1811 (ELMP…QNGL), and 1829-1854 (LGQA…TSRE). Residues 1324–1334 (SSIQISSQISA) show a composition bias toward low complexity. Residues 1342–1355 (LKNTAIMNSSQQES) are compositionally biased toward polar residues. Residues 1615–1625 (PSGTILLNSSK) are compositionally biased toward polar residues. A compositionally biased stretch (basic and acidic residues) spans 1626–1635 (QTEKSKVDDL). Phosphoserine occurs at positions 1637 and 1795. Polar residues predominate over residues 1800 to 1811 (TENTNINAQNGL). Residue serine 1852 is modified to Phosphoserine.

Belongs to the RIF1 family. Interacts with RAP1 (via C-terminus). Interacts with RIF2.

The protein localises to the nucleus. Its subcellular location is the chromosome. The protein resides in the telomere. Its function is as follows. Negatively regulates telomere length by preventing telomere elongation or promoting degradation of the telomere ends. Recruited to telomeres by interaction with the C-terminus of RAP1, which binds directly to telomeric repeat DNA. This may create a negative feedback loop in which the addition of new telomere repeats creates binding sites for inhibitors of telomere length extension. May also influence the balance of transcriptional silencing at telomeres and the silent mating type locus HMR, which is mediated by SIR (Silent Information Regulator) proteins including SIR3 and SIR4. RIF1 competes with SIR proteins for binding to the C-terminus of RAP1. In the absence of RIF1, a limiting cellular pool of SIR proteins may preferentially associate with RAP1 at sub-telomeric loci, causing enhanced telomeric silencing and attenuated silencing of the HMR locus. The protein is Telomere length regulator protein RIF1 (RIF1) of Saccharomyces cerevisiae (strain ATCC 204508 / S288c) (Baker's yeast).